The chain runs to 254 residues: Vesicle transport protein USE1 (254 aa).

Over 1 to 228 (MAYISENELK…AYKCGYDCFK (228 aa)) the chain is Cytoplasmic. A helical; Anchor for type IV membrane protein membrane pass occupies residues 229-249 (VMLIVLIFMSFVSMVLMMKIF). Topologically, residues 250–254 (KKAST) are lumenal.

Belongs to the USE1 family.

Its subcellular location is the endoplasmic reticulum membrane. In terms of biological role, SNARE that may be involved in targeting and fusion of Golgi-derived retrograde transport vesicles with the ER. The chain is Vesicle transport protein USE1 from Caenorhabditis elegans.